Consider the following 532-residue polypeptide: Berberine bridge enzyme-like 18 (532 aa).

The N-terminal stretch at 1 to 29 (MKFQSFFSSVLIFFTTSTLLLSIPHPVSA) is a signal peptide. N30, N33, N46, N59, N147, N169, and N262 each carry an N-linked (GlcNAc...) asparagine glycan. An intrachain disulfide couples C40 to C102. Positions 80 to 254 (DVPKPVLILT…LSWKIGLINV (175 aa)) constitute an FAD-binding PCMH-type domain. The segment at residues 117 to 179 (HDYEGLSYVT…RTLAFPAGVC (63 aa)) is a cross-link (6-(S-cysteinyl)-8alpha-(pros-histidyl)-FAD (His-Cys)).

This sequence belongs to the oxygen-dependent FAD-linked oxidoreductase family. Requires FAD as cofactor. Post-translationally, the FAD cofactor is bound via a bicovalent 6-S-cysteinyl, 8alpha-N1-histidyl FAD linkage.

It is found in the secreted. The protein localises to the cell wall. In Arabidopsis thaliana (Mouse-ear cress), this protein is Berberine bridge enzyme-like 18.